The primary structure comprises 173 residues: Crossover junction endodeoxyribonuclease RuvC (173 aa).

Catalysis depends on residues Asp8, Glu67, and Asp139. 3 residues coordinate Mg(2+): Asp8, Glu67, and Asp139.

The protein belongs to the RuvC family. In terms of assembly, homodimer which binds Holliday junction (HJ) DNA. The HJ becomes 2-fold symmetrical on binding to RuvC with unstacked arms; it has a different conformation from HJ DNA in complex with RuvA. In the full resolvosome a probable DNA-RuvA(4)-RuvB(12)-RuvC(2) complex forms which resolves the HJ. Mg(2+) serves as cofactor.

The protein resides in the cytoplasm. It catalyses the reaction Endonucleolytic cleavage at a junction such as a reciprocal single-stranded crossover between two homologous DNA duplexes (Holliday junction).. Its function is as follows. The RuvA-RuvB-RuvC complex processes Holliday junction (HJ) DNA during genetic recombination and DNA repair. Endonuclease that resolves HJ intermediates. Cleaves cruciform DNA by making single-stranded nicks across the HJ at symmetrical positions within the homologous arms, yielding a 5'-phosphate and a 3'-hydroxyl group; requires a central core of homology in the junction. The consensus cleavage sequence is 5'-(A/T)TT(C/G)-3'. Cleavage occurs on the 3'-side of the TT dinucleotide at the point of strand exchange. HJ branch migration catalyzed by RuvA-RuvB allows RuvC to scan DNA until it finds its consensus sequence, where it cleaves and resolves the cruciform DNA. In Shigella flexneri serotype 5b (strain 8401), this protein is Crossover junction endodeoxyribonuclease RuvC.